We begin with the raw amino-acid sequence, 245 residues long: MASFTIYPAIDMRGGKCVRLLQGDYNKETVYGDSPVAMAEQFAAQGAEWIHMVDLDGAKEGRRVNDRFVIEAANRLSVNVQVGGGIRTEEDVAYYLERGVARVILGSAAISNPTFVKKMLQTYGRRIVIGIDARDGFVATEGWLETSNVKAEELGQMLAEAGAETFIFTDIATDGTLSGPNITAAVRLAEATGKEVIASGGVRSLDDLRALREYAEQGIGGAIVGKALYTNQFTLAEALKAVNER.

Residue Asp11 is the Proton acceptor of the active site. Asp132 functions as the Proton donor in the catalytic mechanism.

The protein belongs to the HisA/HisF family.

It is found in the cytoplasm. It carries out the reaction 1-(5-phospho-beta-D-ribosyl)-5-[(5-phospho-beta-D-ribosylamino)methylideneamino]imidazole-4-carboxamide = 5-[(5-phospho-1-deoxy-D-ribulos-1-ylimino)methylamino]-1-(5-phospho-beta-D-ribosyl)imidazole-4-carboxamide. It participates in amino-acid biosynthesis; L-histidine biosynthesis; L-histidine from 5-phospho-alpha-D-ribose 1-diphosphate: step 4/9. In Geobacillus thermodenitrificans (strain NG80-2), this protein is 1-(5-phosphoribosyl)-5-[(5-phosphoribosylamino)methylideneamino] imidazole-4-carboxamide isomerase.